The chain runs to 224 residues: UPF0111 protein TC_0063 (224 aa).

This sequence belongs to the UPF0111 family.

This is UPF0111 protein TC_0063 from Chlamydia muridarum (strain MoPn / Nigg).